The primary structure comprises 2186 residues: Non-reducing polyketide synthase men2 (2186 aa).

Residues 16-255 (FFGDQTVDAL…MQLPLGTPAH (240 aa)) enclose the Starter acyltransferase (SAT) domain. A Ketosynthase family 3 (KS3) domain is found at 382 to 815 (SNLIAVVGQS…GGNNCVLLEE (434 aa)). Catalysis depends on for beta-ketoacyl synthase activity residues cysteine 554, histidine 690, and histidine 729. The Malonyl-CoA:ACP transacylase (MAT) domain occupies 914–1204 (VFAFTGQGAQ…SSLVKSTLSA (291 aa)). Residues 1299 to 1623 (TASLQQVRSE…TRRVLATVLG (325 aa)) form a product template (PT) domain region. The segment at 1303-1434 (QQVRSEQING…CKLHFDKRGS (132 aa)) is N-terminal hotdog fold. In terms of domain architecture, PKS/mFAS DH spans 1303–1619 (QQVRSEQING…FQRLTRRVLA (317 aa)). Residue histidine 1335 is the Proton acceptor; for dehydratase activity of the active site. Residues 1463 to 1619 (TGHRLPKSVV…FQRLTRRVLA (157 aa)) form a C-terminal hotdog fold region. Aspartate 1523 (proton donor; for dehydratase activity) is an active-site residue. The region spanning 1666-1742 (VGDEKADAAI…GLRRAISELS (77 aa)) is the Carrier 1 domain. At serine 1702 the chain carries O-(pantetheine 4'-phosphoryl)serine. Residues 1747–1785 (GPASGSVSVSSSATTTHGMTTPSSTSSAQSSQSSQTPDG) form a disordered region. Positions 1749–1783 (ASGSVSVSSSATTTHGMTTPSSTSSAQSSQSSQTP) are enriched in low complexity. A Carrier 2 domain is found at 1784 to 1861 (DGPGIYANAV…HVRRALGSDS (78 aa)). Residue serine 1821 is modified to O-(pantetheine 4'-phosphoryl)serine. Positions 1857–1878 (LGSDSDGDSKPKSAPAPPAPEP) are disordered. The thioesterase (TE) domain stretch occupies residues 1921 to 2163 (LFFLPDGTGY…TMPCDHLSLL (243 aa)).

Requires pantetheine 4'-phosphate as cofactor.

It participates in secondary metabolite biosynthesis. Its function is as follows. Non-reducing polyketide synthase; part of the gene cluster that mediates the biosynthesis of menisporopsin A, a bioactive macrocyclic polylactone. The biosynthesis of menisporopsin A is performed by a reducing (man1) and a non-reducing (men2) polyketide synthase that catalyze the formation of each menisporopsin A subunits, while the esterification and cyclolactonization activities are probably peformed by the unusual thioesterase domain of men2. First, a reduced diketide intermediate, 3-hydroxybutyryl-S-ACP is produced by men1 and transferred to men2; this is followed by a second reduced diketide which is further elongated using 3 units of malonyl-coA to form a reduced pentaketide. The cyclization of this intermediate by the PT domain forms the second subunit, 2,4-dihydroxy-6-(2-hydroxy-n-propyl)benzoyl-S-ACP. The TE domain of men2 then esterifies the secondary hydroxyl group on the side chain of the second subunit with the acyl-TE of the first subunit to form the first ester intermediate. This process occurs iteratively to form a linear tetraester intermediate. The final subunit is formed by a similar process, except that an extra malonyl-CoA is required in an additional elongation step to form a reduced hexaketide intermediate, and the carbonyl group next to the secondary hydroxyl group is reduced by a trans-acting ketoreductase. Again, the PT domain catalyzes cyclization to form the largest subunit, 2,4-dihydroxy-6-(2,4-dihydroxy-n-pentyl) benzoyl-S-ACP. Then the linear pentaester intermediate is formed. In this step, if the intermediate transfer rate is slow, intra- molecular cyclization involving the secondary hydroxyl group of the pentaester intermediate may occur to form menisporopsin B. Alternatively, transfer of the pentaester intermediate to the TE domain would allow cyclolactonization to be catalyzed by the TE to form menisporopsin A. This is Non-reducing polyketide synthase men2 from Menisporopsis theobromae.